The chain runs to 563 residues: Delta-1-pyrroline-5-carboxylate dehydrogenase, mitochondrial (563 aa).

Residues 1-24 (MLLPAPALRRALLSRPWTGAGLRW) constitute a mitochondrion transit peptide. Residue Lys-31 is modified to N6-succinyllysine. Phosphoserine is present on Ser-44. At Lys-52 the chain carries N6-acetyllysine. Residues Lys-93, Lys-99, Lys-114, Lys-130, and Lys-175 each carry the N6-acetyllysine; alternate modification. Lys-93, Lys-99, Lys-114, Lys-130, and Lys-175 each carry N6-succinyllysine; alternate. Residues Ser-208, Lys-233, and 286-290 (GSVPT) contribute to the NAD(+) site. The active-site Proton acceptor is the Glu-314. Position 318 is an N6-acetyllysine (Lys-318). Lys-347 is modified (N6-succinyllysine). The active-site Nucleophile is the Cys-348. N6-acetyllysine is present on residues Lys-365 and Lys-376. N6-succinyllysine is present on Lys-395. Glu-447 is a binding site for NAD(+). Lys-462 is subject to N6-acetyllysine. An N6-acetyllysine; alternate modification is found at Lys-509. Residue Lys-509 is modified to N6-succinyllysine; alternate. Position 513 (Ser-513) interacts with substrate. Lys-531 and Lys-552 each carry N6-acetyllysine.

The protein belongs to the aldehyde dehydrogenase family. As to quaternary structure, homodimer. In terms of tissue distribution, highest expression is found in liver followed by skeletal muscle, kidney, heart, brain, placenta, lung and pancreas.

Its subcellular location is the mitochondrion matrix. The catalysed reaction is L-glutamate 5-semialdehyde + NAD(+) + H2O = L-glutamate + NADH + 2 H(+). It participates in amino-acid degradation; L-proline degradation into L-glutamate; L-glutamate from L-proline: step 2/2. Irreversible conversion of delta-1-pyrroline-5-carboxylate (P5C), derived either from proline or ornithine, to glutamate. This is a necessary step in the pathway interconnecting the urea and tricarboxylic acid cycles. The preferred substrate is glutamic gamma-semialdehyde, other substrates include succinic, glutaric and adipic semialdehydes. The protein is Delta-1-pyrroline-5-carboxylate dehydrogenase, mitochondrial (ALDH4A1) of Homo sapiens (Human).